A 232-amino-acid polypeptide reads, in one-letter code: TIR domain-containing adapter molecule 2 (232 aa).

Residues 1-39 show a composition bias toward basic and acidic residues; sequence MGVGKSKLDKCPLSWHKKDSVDADQDGHESDSKNSEEAC. A disordered region spans residues 1 to 70; sequence MGVGKSKLDK…EAKGAGPEEQ (70 aa). G2 carries the N-myristoyl glycine lipid modification. Residues 74 to 226 form the TIR domain; the sequence is EFLKFVILHA…SIWKETRSVS (153 aa). Residue Y164 is modified to Phosphotyrosine.

In terms of assembly, homodimer. Interacts with TLR4, TICAM1, IRF3 and IRF7 in response to LPS. Interacts with IL1R1, IL1RAP, IRAK2, IRAK3 and TRAF6. Interacts with protein kinase-inactive mutants of IRAK1 and IRAK4. Isoform 1 interacts with isoform 2; the interaction occurs in late endosomes and disrupts the interaction between isoform 1 and TICAM1. Interacts with MYD88; the interaction decreases after IL-18 stimulation in a time-dependent manner. Interacts with IL18R1 and IL18RAP. Interacts with TLR2. Interacts with RAB11FIP2. In terms of processing, myristoylated. Required for membrane association which is critical for its ability to initiate efficient signaling. Phosphorylated by PRKCE in response to LPS. Phosphorylation is essential for its function. It is depleted from the membrane upon phosphorylation. Tyrosine phosphorylation is inhibited by phosphatase PTPN4.

Its subcellular location is the cytoplasm. It localises to the golgi apparatus. It is found in the cell membrane. The protein resides in the early endosome. The protein localises to the late endosome. Its subcellular location is the endoplasmic reticulum. It localises to the cell projection. It is found in the phagocytic cup. Functions as a sorting adapter in different signaling pathways to facilitate downstream signaling leading to type I interferon induction. In TLR4 signaling, physically bridges TLR4 and TICAM1 and functionally transmits signal to TICAM1 in early endosomes after endocytosis of TLR4. In TLR2 signaling, physically bridges TLR2 and MYD88 and is required for the TLR2-dependent movement of MYD88 to endosomes following ligand engagement. Involved in IL-18 signaling and is proposed to function as a sorting adapter for MYD88 in IL-18 signaling during adaptive immune response. Forms a complex with RAB11FIP2 that is recruited to the phagosomes to promote the activation of the actin-regulatory GTPases RAC1 and CDC42 and subsequent phagocytosis of Gram-negative bacteria. This Mus musculus (Mouse) protein is TIR domain-containing adapter molecule 2 (Ticam2).